We begin with the raw amino-acid sequence, 37 residues long: Large ribosomal subunit protein bL36c (37 aa).

It belongs to the bacterial ribosomal protein bL36 family.

Its subcellular location is the plastid. It localises to the chloroplast. The polypeptide is Large ribosomal subunit protein bL36c (rpl36) (Cyanidium caldarium (Red alga)).